A 167-amino-acid polypeptide reads, in one-letter code: N5-carboxyaminoimidazole ribonucleotide mutase (167 aa).

Substrate contacts are provided by S11, D14, and R41.

The protein belongs to the AIR carboxylase family. Class I subfamily.

The enzyme catalyses 5-carboxyamino-1-(5-phospho-D-ribosyl)imidazole + H(+) = 5-amino-1-(5-phospho-D-ribosyl)imidazole-4-carboxylate. The protein operates within purine metabolism; IMP biosynthesis via de novo pathway; 5-amino-1-(5-phospho-D-ribosyl)imidazole-4-carboxylate from 5-amino-1-(5-phospho-D-ribosyl)imidazole (N5-CAIR route): step 2/2. Its function is as follows. Catalyzes the conversion of N5-carboxyaminoimidazole ribonucleotide (N5-CAIR) to 4-carboxy-5-aminoimidazole ribonucleotide (CAIR). The sequence is that of N5-carboxyaminoimidazole ribonucleotide mutase from Aquifex aeolicus (strain VF5).